We begin with the raw amino-acid sequence, 133 residues long: Small ribosomal subunit protein uS8 (133 aa).

It belongs to the universal ribosomal protein uS8 family. As to quaternary structure, part of the 30S ribosomal subunit. Contacts proteins S5 and S12.

Functionally, one of the primary rRNA binding proteins, it binds directly to 16S rRNA central domain where it helps coordinate assembly of the platform of the 30S subunit. This Salinibacter ruber (strain DSM 13855 / M31) protein is Small ribosomal subunit protein uS8.